The chain runs to 344 residues: Probable aldo-keto reductase 1 (344 aa).

Tyr63 serves as the catalytic Proton donor. His130 contacts substrate. 209-219 (SPLGLGFFAAG) is a binding site for NADP(+).

This sequence belongs to the aldo/keto reductase family.

The chain is Probable aldo-keto reductase 1 from Arabidopsis thaliana (Mouse-ear cress).